Consider the following 477-residue polypeptide: C3a anaphylatoxin chemotactic receptor (477 aa).

The Extracellular segment spans residues 1-23 (MESFDADTNSTDLHSRPLFQPQD). A glycan (N-linked (GlcNAc...) asparagine) is linked at N9. The helical transmembrane segment at 24–46 (IASMVILGLTCLLGLLGNGLVLW) threads the bilayer. The Cytoplasmic portion of the chain corresponds to 47-57 (VAGVKMKTTVN). Residues 58-80 (TVWFLHLTLADFLCCLSLPFSLA) traverse the membrane as a helical segment. The Extracellular portion of the chain corresponds to 81 to 96 (HLILQGHWPYGLFLCK). C95 and C172 form a disulfide bridge. The helical transmembrane segment at 97–118 (LIPSIIILNMFASVFLLTAISL) threads the bilayer. Residues 119 to 139 (DRCLIVHKPIWCQNHRNVRTA) lie on the Cytoplasmic side of the membrane. A helical membrane pass occupies residues 140-160 (FAICGCVWVVAFVMCVPVFVY). Topologically, residues 161–333 (RDLFIMDNRS…TPLMAITITR (173 aa)) are extracellular. A glycan (N-linked (GlcNAc...) asparagine) is linked at N168. A sulfotyrosine mark is found at Y174 and Y184. N-linked (GlcNAc...) asparagine glycans are attached at residues N197 and N201. Y312 carries the post-translational modification Sulfotyrosine. Residues 334 to 353 (LVVGFLVPFFIMVICYSLIV) traverse the membrane as a helical segment. Residues 354–370 (FRMRKTNFTKSRNKTFR) are Cytoplasmic-facing. Residues 371–393 (VAVAVVTVFFICWTPYHLVGVLL) traverse the membrane as a helical segment. Topologically, residues 394-410 (LITDPESSLGEAVMSWD) are extracellular. Residues 411–431 (HMSIALASANSCFNPFLYALL) traverse the membrane as a helical segment. Residues 432–477 (GKDFRKKARQSIKGILEAAFSEELTHSTNCTQDKASSKRNNMSTDV) are Cytoplasmic-facing. Phosphoserine is present on S452. T456 carries the post-translational modification Phosphothreonine.

This sequence belongs to the G-protein coupled receptor 1 family. As to quaternary structure, interacts with VGF-derived peptide TLQP-21. In terms of tissue distribution, detected in varying levels in all tissues examined except the spleen. Especially abundant in heart and lung.

The protein localises to the cell membrane. In terms of biological role, receptor for the chemotactic and inflammatory peptide anaphylatoxin C3a. This receptor stimulates chemotaxis, granule enzyme release and superoxide anion production. This is C3a anaphylatoxin chemotactic receptor (C3ar1) from Mus musculus (Mouse).